The following is a 99-amino-acid chain: Protein 7.3 (99 aa).

Residues 59–99 (VPEKEVSTEDEAQTESGRKKARAGGKKSLSVARSSGGGINI) are disordered.

It belongs to the T7likevirus protein 7.3 family.

It is found in the virion. Plays an essential role most probably in virion tail assembly. May form a scaffold around which gp11 and gp12 polymerize. Gets ejected from the infecting particle into the bacterial cell. The protein is Protein 7.3 of Escherichia phage T7 (Bacteriophage T7).